Consider the following 204-residue polypeptide: Protein LURP-one-related 14 (204 aa).

This sequence belongs to the LOR family.

In terms of biological role, might be related to the phospholipid scramblase and tubby-like superfamily of membrane tethered transcription factors. The protein is Protein LURP-one-related 14 of Arabidopsis thaliana (Mouse-ear cress).